The following is a 336-amino-acid chain: Terephthalate 1,2-dioxygenase, reductase component 1 (336 aa).

In terms of domain architecture, 2Fe-2S ferredoxin-type spans 3–91 (HQIHIHDSDI…DIRIQPSSFR (89 aa)). Cys37, Cys42, Cys45, and Cys75 together coordinate [2Fe-2S] cluster. The FAD-binding FR-type domain occupies 98–197 (RKRFTAKVYS…ELPFGSIALK (100 aa)).

Monomer. Part of a multicomponent enzyme system composed of a reductase (TphA1I or TphA1II) and a two-subunit oxygenase component (TphA2I or TphA2II and TphA3I or TphA3II). It depends on FAD as a cofactor. Requires [2Fe-2S] cluster as cofactor.

It catalyses the reaction terephthalate + NADH + O2 + H(+) = (3S,4R)-3,4-dihydroxycyclohexa-1,5-diene-1,4-dicarboxylate + NAD(+). Component of the terephthalate 1,2-dioxygenase multicomponent enzyme system which catalyzes the dioxygenation of terephthalate (TER/TPA) to 1,2-dihydroxy-3,5-cyclohexadiene-1,4-dicarboxylic acid (DCD). TphA1 probably reduces TphA2A3. It can also use 2,5-dicarboxypyridine (PDC) and 1,4-napthalenedicarboxylic acid (NDC) as substrates, and preferentially uses NADPH which is the physiological electron donor. The chain is Terephthalate 1,2-dioxygenase, reductase component 1 (tphA1I) from Comamonas sp.